The chain runs to 1369 residues: ATP-dependent RNA helicase DHX29 (1369 aa).

2 disordered regions span residues 27–75 (SAEA…TNDS) and 176–226 (SQEF…KNME). A phosphoserine mark is found at Ser71, Ser192, and Ser200. A compositionally biased stretch (polar residues) spans 189–201 (KFQSPQIQATISP). Residues 208-226 (KTYEEDPKSKPKKEEKNME) are compositionally biased toward basic and acidic residues. Coiled coils occupy residues 222–256 (EKNM…EEEE), 283–310 (LEKN…LEDH), and 492–519 (IAKL…NSED). Residues 502–526 (QQQQQQQHSENKRENSEDPEESWEN) are disordered. In terms of domain architecture, Helicase ATP-binding spans 582–755 (VETLKRHRVV…FTHCPILRIS (174 aa)). 595–602 (GETGSGKS) provides a ligand contact to ATP. Positions 702 to 705 (DEVH) match the DEAH box motif. Residues 849–1026 (LILELLAYLD…ELCLHIMKCN (178 aa)) form the Helicase C-terminal domain.

The protein belongs to the DEAD box helicase family. DEAH subfamily. In terms of assembly, part of the 43S pre-initiation complex (PIC) that contains at least Met-tRNA, EIF1, EIF1A (EIF1AX or EIF1AY), EIF2S1, EIF2S2, EIF2S3, EIF3A, EIF3B, EIF3C, EIF3D, EIF3E, EIF3F, EIF3G, EIF3H, EIF3I, EIF3J, EIF3K, EIF3L, EIF3M, DHX29 and the 40S ribosomal subunit.

It is found in the cytoplasm. It carries out the reaction ATP + H2O = ADP + phosphate + H(+). Its function is as follows. ATP-binding RNA helicase involved in translation initiation. Part of the 43S pre-initiation complex that is required for efficient initiation on mRNAs of higher eukaryotes with structured 5'-UTRs by promoting efficient NTPase-dependent 48S complex formation. Specifically binds to the 40S ribosome near the mRNA entrance. Does not possess a processive helicase activity. In Homo sapiens (Human), this protein is ATP-dependent RNA helicase DHX29.